Reading from the N-terminus, the 580-residue chain is G1/S-specific cyclin CLN3 (580 aa).

A compositionally biased stretch (low complexity) spans 454 to 469; the sequence is FTPTSSSSSPSPFNSP. Disordered stretches follow at residues 454-498 and 546-580; these read FTPT…QNSF and MATA…KKTR. Composition is skewed to polar residues over residues 470–480 and 563–580; these read YKTSSSMTTPD and TSSV…KKTR.

Belongs to the cyclin family.

Its function is as follows. Essential for the control of the cell cycle at the G1/S (start) transition. CLN3 may be an upstream activator of the G1 cyclins which directly catalyze start. This Saccharomyces cerevisiae (strain ATCC 204508 / S288c) (Baker's yeast) protein is G1/S-specific cyclin CLN3 (CLN3).